Consider the following 659-residue polypeptide: Zinc finger protein 304 (659 aa).

Positions 14-88 (VTFEDVFVYF…TAESGLFQKA (75 aa)) constitute a KRAB domain. 16 C2H2-type zinc fingers span residues 89 to 111 (HPCE…QGSH), 115 to 139 (KLCT…QKQH), 251 to 273 (FRCL…RKIH), 279 to 301 (HVCK…QKFH), 307 to 329 (YTCS…QRVH), 335 to 357 (YDCS…QRIH), 363 to 385 (YKCN…QRFH), 391 to 413 (YECS…WRIH), 419 to 441 (YECI…RRVH), 447 to 469 (YVCS…QIIH), 475 to 497 (YECS…QKIH), 503 to 525 (YECG…QRIH), 531 to 553 (YECN…QRVH), 559 to 581 (YVCS…KKVH), 587 to 609 (YECS…QRVH), and 615 to 637 (YVCS…QKAH).

This sequence belongs to the krueppel C2H2-type zinc-finger protein family. As to quaternary structure, probably part of a corepressor complex containing ZNF304, TRIM28, SETDB1 and DNMT1; leading to promoter hypermethylation and transcriptional silencing. Probably associates with Polycomb group (PcG) complexes; leading to trimethylation of 'Lys-27' of histone H3 (H3K27me3). Interacts with USP28. In terms of processing, deubiquitinated by USP28; the deubiquitination leads to the stabilization of ZNF304 from proteolytic degradation. Expressed in undifferentiated embryonic stem cells (ESCs). Expressed strongly in colorectal cancers cells (CRCs). Expressed strongly in ovarian carcinoma (OC) tumor cell lines compared to non-transformed ovarian epithelial cells (at protein level). Expressed in lymphoid tissues, thyroid, adrenal gland, prostate, pancreas and skeletal muscles.

It is found in the nucleus. In terms of biological role, acts as a transcriptional regulator and plays a role in gene silencing. Probably forms a corepressor complex required for activated KRAS-mediated promoter hypermethylation and transcriptional silencing of several tumor suppressor genes (TSGs) or other tumor-related genes in colorectal cancer (CRC) cells. Also required to maintain a transcriptionally repressive state of genes in undifferentiated embryonic stem cells (ESCs) by inducing trimethylation of 'Lys-27' of histone H3 (H3K27me3) in a Polycomb group (PcG) complexes-dependent manner. Associates at promoter regions of TSGs and mediates the recruitment of the corepressor complex containing the scaffolding protein TRIM28, methyltransferase DNMT1 and histone methyltransferase SETDB1 and/or the PcG complexes at those sites. Transcription factor involved in the metastatic cascade process by inducing cell migration and proliferation and gain resistance to anoikis of ovarian carcinoma (OC) cells via integrin-mediated signaling pathways. Associates with the ITGB1 promoter and positively regulates beta-1 integrin transcription expression. Promotes angiogenesis. Promotes tumor growth. This chain is Zinc finger protein 304, found in Homo sapiens (Human).